We begin with the raw amino-acid sequence, 240 residues long: tRNA pseudouridine synthase B (240 aa).

Asp54 functions as the Nucleophile in the catalytic mechanism.

This sequence belongs to the pseudouridine synthase TruB family. Type 1 subfamily.

It carries out the reaction uridine(55) in tRNA = pseudouridine(55) in tRNA. Functionally, responsible for synthesis of pseudouridine from uracil-55 in the psi GC loop of transfer RNAs. The polypeptide is tRNA pseudouridine synthase B (Chlorobium phaeovibrioides (strain DSM 265 / 1930) (Prosthecochloris vibrioformis (strain DSM 265))).